An 81-amino-acid polypeptide reads, in one-letter code: Protein Vpu (81 aa).

Residues 1–6 are Extracellular-facing; sequence MQPIQI. Residues 7–27 form a helical membrane-spanning segment; that stretch reads AIAALVVAIIIAIVVWSIVII. Residues 28 to 81 are Cytoplasmic-facing; sequence EYRKILRQRKIDRLIDRLIERAEDSGNESEGEISALVEMGVEMGHHAPWDIDDL. Ser52 and Ser56 each carry phosphoserine; by host CK2.

It belongs to the HIV-1 VPU protein family. As to quaternary structure, homopentamer. Interacts with host CD4 and BRTC; these interactions induce proteasomal degradation of CD4. Interacts with host BST2; this interaction leads to the degradation of host BST2. Interacts with host FBXW11. Interacts with host AP1M1; this interaction plays a role in the mistrafficking and subsequent degradation of host BST2. Interacts with host RANBP2; this interaction allows Vpu to down-regulate host BLM sumoylation. Post-translationally, phosphorylated by host CK2. This phosphorylation is necessary for interaction with human BTRC and degradation of CD4.

The protein resides in the host membrane. Its activity is regulated as follows. Ion channel activity is inhibited by hexamethylene amiloride in vitro. Its function is as follows. Enhances virion budding by targeting host CD4 and Tetherin/BST2 to proteasome degradation. Degradation of CD4 prevents any unwanted premature interactions between viral Env and its host receptor CD4 in the endoplasmic reticulum. Degradation of antiretroviral protein Tetherin/BST2 is important for virion budding, as BST2 tethers new viral particles to the host cell membrane. Mechanistically, Vpu bridges either CD4 or BST2 to BTRC, a substrate recognition subunit of the Skp1/Cullin/F-box protein E3 ubiquitin ligase, induces their ubiquitination and subsequent proteasomal degradation. The alteration of the E3 ligase specificity by Vpu seems to promote the degradation of host IKBKB, leading to NF-kappa-B down-regulation and subsequent apoptosis. Acts as a viroporin that forms an oligomeric ion channel in membranes. Modulates the host DNA repair mechanisms to promote degradation of nuclear viral cDNA in cells that are already productively infected in order to suppress immune sensing and proviral hyper-integration (superinfection). Manipulates PML-NBs and modulates SUMOylation of host BLM protein thereby enhancing its DNA-end processing activity toward viral unintegrated linear DNA. Also inhibits RAD52-mediated homologous repair of viral cDNA, preventing the generation of dead-end circular forms of single copies of the long terminal repeat and permitting sustained nucleolytic attack. The chain is Protein Vpu from Homo sapiens (Human).